Here is a 311-residue protein sequence, read N- to C-terminus: Methionyl-tRNA formyltransferase (311 aa).

111 to 114 (SLLP) contacts (6S)-5,6,7,8-tetrahydrofolate.

Belongs to the Fmt family.

The catalysed reaction is L-methionyl-tRNA(fMet) + (6R)-10-formyltetrahydrofolate = N-formyl-L-methionyl-tRNA(fMet) + (6S)-5,6,7,8-tetrahydrofolate + H(+). In terms of biological role, attaches a formyl group to the free amino group of methionyl-tRNA(fMet). The formyl group appears to play a dual role in the initiator identity of N-formylmethionyl-tRNA by promoting its recognition by IF2 and preventing the misappropriation of this tRNA by the elongation apparatus. The sequence is that of Methionyl-tRNA formyltransferase from Caldicellulosiruptor saccharolyticus (strain ATCC 43494 / DSM 8903 / Tp8T 6331).